A 281-amino-acid chain; its full sequence is MKLAVYGKGGIGKSTTSCNISVALARRGKKVLQIGCDPKHDSTFTLTGFLIPTIIDTLQAKDYHYEDVWPEDVIYKGYGGVDCVEAGGPPAGAGCGGYVVGETVKLLKELNAFDEYDVILFDVLGDVVCGGFAAPLNYADYCLIVTDNGFDALFAANRIAASVREKARTHPLRLAGLIGNRTNKRDLIEKYVEAVPMPILEVLPLIEDIRVSRVKGKTLFEMAESDPSLNDVCDYYLNIADQILARPEGVVPKDVPDRDLFALLSDFYLNPQGSERSLAAV.

ATP contacts are provided by residues 10–15 (GIGKST) and lysine 39. Serine 14 provides a ligand contact to Mg(2+). [4Fe-4S] cluster-binding residues include cysteine 95 and cysteine 129. ATP is bound at residue 180-181 (NR).

It belongs to the NifH/BchL/ChlL family. As to quaternary structure, homodimer. Protochlorophyllide reductase is composed of three subunits; ChlL, ChlN and ChlB. [4Fe-4S] cluster serves as cofactor.

It carries out the reaction chlorophyllide a + oxidized 2[4Fe-4S]-[ferredoxin] + 2 ADP + 2 phosphate = protochlorophyllide a + reduced 2[4Fe-4S]-[ferredoxin] + 2 ATP + 2 H2O. It functions in the pathway porphyrin-containing compound metabolism; chlorophyll biosynthesis (light-independent). Component of the dark-operative protochlorophyllide reductase (DPOR) that uses Mg-ATP and reduced ferredoxin to reduce ring D of protochlorophyllide (Pchlide) to form chlorophyllide a (Chlide). This reaction is light-independent. The L component serves as a unique electron donor to the NB-component of the complex, and binds Mg-ATP. The polypeptide is Light-independent protochlorophyllide reductase iron-sulfur ATP-binding protein (Thermosynechococcus vestitus (strain NIES-2133 / IAM M-273 / BP-1)).